Here is a 133-residue protein sequence, read N- to C-terminus: Large ribosomal subunit protein uL14 (133 aa).

Belongs to the universal ribosomal protein uL14 family. As to quaternary structure, part of the 50S ribosomal subunit. Forms a cluster with proteins L3 and L19. In the 70S ribosome, L14 and L19 interact and together make contacts with the 16S rRNA in bridges B5 and B8.

In terms of biological role, binds to 23S rRNA. Forms part of two intersubunit bridges in the 70S ribosome. The sequence is that of Large ribosomal subunit protein uL14 from Gloeobacter violaceus (strain ATCC 29082 / PCC 7421).